Here is a 247-residue protein sequence, read N- to C-terminus: uncharacterized protein (247 aa).

The disordered stretch occupies residues 225–247 (LASAPVPPSGSGNSGHRRANLGL).

This is an uncharacterized protein from Methanocaldococcus jannaschii (strain ATCC 43067 / DSM 2661 / JAL-1 / JCM 10045 / NBRC 100440) (Methanococcus jannaschii).